The sequence spans 101 residues: Small ribosomal subunit protein uS14A (101 aa).

A disordered region spans residues Ala-29–His-73. A compositionally biased stretch (basic and acidic residues) spans Arg-61–Pro-70.

It belongs to the universal ribosomal protein uS14 family. Part of the 30S ribosomal subunit. Contacts proteins S3 and S10.

Its function is as follows. Binds 16S rRNA, required for the assembly of 30S particles and may also be responsible for determining the conformation of the 16S rRNA at the A site. This chain is Small ribosomal subunit protein uS14A, found in Mycolicibacterium gilvum (strain PYR-GCK) (Mycobacterium gilvum (strain PYR-GCK)).